A 231-amino-acid chain; its full sequence is Protein OPG061 (231 aa).

It belongs to the orthopoxvirus OPG058 family.

The protein localises to the host nucleus. The protein resides in the host nucleolus. The polypeptide is Protein OPG061 (OPG061) (Vaccinia virus (strain L-IVP) (VACV)).